A 520-amino-acid chain; its full sequence is Genome polyprotein (520 aa).

Ser2 is modified (N-acetylserine; by host). Positions Ser2–Lys23 are interaction with STAT1. An interaction with EIF2AK2/PKR region spans residues Ser2–Pro58. Residues Ser2–Arg59 are interaction with DDX3X. The segment at Ser2–Ala75 is disordered. Residues Ser2 to Asn168 are Cytoplasmic-facing. 2 short sequence motifs (nuclear localization signal) span residues Pro5–Arg13 and Thr38–Arg43. Basic residues predominate over residues Pro7–Asn16. Phosphoserine; by host is present on Ser53. 2 short sequence motifs (nuclear localization signal) span residues Pro58–Pro64 and Pro66–Pro71. Residues Pro58–Ala68 show a composition bias toward basic residues. Phosphoserine; by host is present on Ser99. Residues Pro112 to Ala152 are important for endoplasmic reticulum and mitochondrial localization. The residue at position 116 (Ser116) is a Phosphoserine; by host PKA. The segment at Val122–Ser173 is interaction with APOA2. Positions Tyr164–Gly167 are important for lipid droplets localization. Residues Leu169 to Ala189 traverse the membrane as a helical segment. Positions Leu178 to Ala191 are cleaved as a propeptide — ER anchor for the core protein, removed in mature form by host signal peptidase. Topologically, residues Ser190 to Gly358 are lumenal. N-linked (GlcNAc...) asparagine; by host glycosylation is found at Asn196, Asn209, Asn234, and Asn250. The important for fusion stretch occupies residues Leu265–Arg296. Residue Asn305 is glycosylated (N-linked (GlcNAc...) asparagine; by host). Residues Leu359 to Ala379 form a helical membrane-spanning segment. At Gly380–Thr520 the chain is on the lumenal side. An HVR1 region spans residues Asn385 to Lys411. N-linked (GlcNAc...) asparagine; by host glycosylation occurs at Asn418. 3 N-linked (GlcNAc...) (high mannose) asparagine; by host glycosylation sites follow: Asn424, Asn431, and Asn449. A disulfide bridge connects residues Cys453 and Cys460. Positions Thr474 to Ser479 are HVR2. A CD81-binding 1 region spans residues Ile480 to Arg493. 2 cysteine pairs are disulfide-bonded: Cys487–Cys495 and Cys504–Cys509.

It belongs to the hepacivirus polyprotein family. In terms of assembly, homooligomer. Interacts with E1 (via C-terminus). Interacts with the non-structural protein 5A. Interacts (via N-terminus) with host STAT1 (via SH2 domain); this interaction results in decreased STAT1 phosphorylation and ubiquitin-mediated proteasome-dependent STAT1 degradation, leading to decreased IFN-stimulated gene transcription. Interacts with host STAT3; this interaction constitutively activates STAT3. Interacts with host LTBR receptor. Interacts with host TNFRSF1A receptor and possibly induces apoptosis. Interacts with host HNRPK. Interacts with host YWHAE. Interacts with host UBE3A/E6AP. Interacts with host DDX3X. Interacts with host APOA2. Interacts with host RXRA protein. Interacts with host SP110 isoform 3/Sp110b; this interaction sequesters the transcriptional corepressor SP110 away from the nucleus. Interacts with host CREB3 nuclear transcription protein; this interaction triggers cell transformation. Interacts with host ACY3. Interacts with host C1QR1. Interacts with host RBM24; this interaction, which enhances the interaction of the mature core protein with 5'-UTR, may inhibit viral translation and favor replication. Interacts with host EIF2AK2/PKR; this interaction induces the autophosphorylation of EIF2AK2. Part of the viral assembly initiation complex composed of NS2, E1, E2, NS3, NS4A, NS5A and the mature core protein. As to quaternary structure, forms a heterodimer with envelope glycoprotein E2. Interacts with mature core protein. Interacts with protease NS2. The heterodimer E1/E2 interacts with host CLDN1; this interaction plays a role in viral entry into host cell. Interacts with host SPSB2 (via C-terminus). Part of the viral assembly initiation complex composed of NS2, E1, E2, NS3, NS4A, NS5A and the mature core protein. Forms a heterodimer with envelope glycoprotein E1. Interacts with host CD81 and SCARB1 receptors; these interactions play a role in viral entry into host cell. Interacts with host EIF2AK2/PKR; this interaction inhibits EIF2AK2 and probably allows the virus to evade the innate immune response. Interacts with host CD209/DC-SIGN and CLEC4M/DC-SIGNR. Interact with host SPCS1; this interaction is essential for viral particle assembly. Interacts with protease NS2. The heterodimer E1/E2 interacts with host CLDN1; this interaction plays a role in viral entry into host cell. Part of the viral assembly initiation complex composed of NS2, E1, E2, NS3, NS4A, NS5A and the mature core protein. Specific enzymatic cleavages in vivo yield mature proteins. The structural proteins, core, E1, E2 and p7 are produced by proteolytic processing by host signal peptidases. The core protein precursor is synthesized as a 23 kDa, which is retained in the ER membrane through the hydrophobic signal peptide. Cleavage by the signal peptidase releases the 21 kDa mature core protein. The cleavage of the core protein precursor occurs between aminoacids 176 and 188 but the exact cleavage site is not known. Some degraded forms of the core protein appear as well during the course of infection. The other proteins (p7, NS2, NS3, NS4A, NS4B, NS5A and NS5B) are cleaved by the viral proteases. Autoprocessing between NS2 and NS3 is mediated by the NS2 cysteine protease catalytic domain and regulated by the NS3 N-terminal domain. In terms of processing, phosphorylated by host PKC and PKA. Post-translationally, ubiquitinated; mediated by UBE3A and leading to core protein subsequent proteasomal degradation. Highly N-glycosylated.

It is found in the host endoplasmic reticulum membrane. It localises to the host mitochondrion membrane. The protein localises to the virion. The protein resides in the host cytoplasm. Its subcellular location is the host nucleus. It is found in the host lipid droplet. It localises to the virion membrane. Packages viral RNA to form a viral nucleocapsid, and promotes virion budding. Participates in the viral particle production as a result of its interaction with the non-structural protein 5A. Binds RNA and may function as a RNA chaperone to induce the RNA structural rearrangements taking place during virus replication. Modulates viral translation initiation by interacting with viral IRES and 40S ribosomal subunit. Affects various cell signaling pathways, host immunity and lipid metabolism. Prevents the establishment of cellular antiviral state by blocking the interferon-alpha/beta (IFN-alpha/beta) and IFN-gamma signaling pathways and by blocking the formation of phosphorylated STAT1 and promoting ubiquitin-mediated proteasome-dependent degradation of STAT1. Activates STAT3 leading to cellular transformation. Regulates the activity of cellular genes, including c-myc and c-fos. May repress the promoter of p53, and sequester CREB3 and SP110 isoform 3/Sp110b in the cytoplasm. Represses cell cycle negative regulating factor CDKN1A, thereby interrupting an important check point of normal cell cycle regulation. Targets transcription factors involved in the regulation of inflammatory responses and in the immune response: suppresses TNF-induced NF-kappa-B activation, and activates AP-1. Binds to dendritic cells (DCs) via C1QR1, resulting in down-regulation of T-lymphocytes proliferation. Alters lipid metabolism by interacting with hepatocellular proteins involved in lipid accumulation and storage. Induces up-regulation of FAS promoter activity, and thereby contributes to the increased triglyceride accumulation in hepatocytes (steatosis). Functionally, forms a heterodimer with envelope glycoprotein E2, which mediates virus attachment to the host cell, virion internalization through clathrin-dependent endocytosis and fusion with host membrane. Fusion with the host cell is most likely mediated by both E1 and E2, through conformational rearrangements of the heterodimer required for fusion rather than a classical class II fusion mechanism. E1/E2 heterodimer binds host apolipoproteins such as APOB and ApoE thereby forming a lipo-viro-particle (LVP). APOE associated to the LVP allows the initial virus attachment to cell surface receptors such as the heparan sulfate proteoglycans (HSPGs), syndecan-1 (SDC1), syndecan-1 (SDC2), the low-density lipoprotein receptor (LDLR) and scavenger receptor class B type I (SCARB1). The cholesterol transfer activity of SCARB1 allows E2 exposure and binding of E2 to SCARB1 and the tetraspanin CD81. E1/E2 heterodimer binding on CD81 activates the epithelial growth factor receptor (EGFR) signaling pathway. Diffusion of the complex E1-E2-EGFR-SCARB1-CD81 to the cell lateral membrane allows further interaction with Claudin 1 (CLDN1) and occludin (OCLN) to finally trigger HCV entry. In terms of biological role, forms a heterodimer with envelope glycoprotein E1, which mediates virus attachment to the host cell, virion internalization through clathrin-dependent endocytosis and fusion with host membrane. Fusion with the host cell is most likely mediated by both E1 and E2, through conformational rearrangements of the heterodimer required for fusion rather than a classical class II fusion mechanism. The interaction between envelope glycoprotein E2 and host apolipoprotein E/APOE allows the proper assembly, maturation and infectivity of the viral particles. This interaction is probably promoted via the up-regulation of cellular autophagy by the virus. E1/E2 heterodimer binds host apolipoproteins such as APOB and APOE thereby forming a lipo-viro-particle (LVP). APOE associated to the LVP allows the initial virus attachment to cell surface receptors such as the heparan sulfate proteoglycans (HSPGs), syndecan-1 (SDC1), syndecan-1 (SDC2), the low-density lipoprotein receptor (LDLR) and scavenger receptor class B type I (SCARB1). The cholesterol transfer activity of SCARB1 allows E2 exposure and binding of E2 to SCARB1 and the tetraspanin CD81. E1/E2 heterodimer binding on CD81 activates the epithelial growth factor receptor (EGFR) signaling pathway. Diffusion of the complex E1-E2-EGFR-SCARB1-CD81 to the cell lateral membrane allows further interaction with Claudin 1 (CLDN1) and occludin (OCLN) to finally trigger HCV entry. Inhibits host EIF2AK2/PKR activation, preventing the establishment of an antiviral state. Viral ligand for CD209/DC-SIGN and CLEC4M/DC-SIGNR, which are respectively found on dendritic cells (DCs), and on liver sinusoidal endothelial cells and macrophage-like cells of lymph node sinuses. These interactions allow the capture of circulating HCV particles by these cells and subsequent facilitated transmission to permissive cells such as hepatocytes and lymphocyte subpopulations. This is Genome polyprotein from Hepatitis C virus (isolate HCV-KF) (HCV).